The chain runs to 419 residues: Probable pectate lyase C (419 aa).

Residues Met1–Ala19 form the signal peptide. N-linked (GlcNAc...) asparagine glycosylation is found at Asn48, Asn164, and Asn201. Arg204 is a catalytic residue. The 36-residue stretch at Asn261–Met296 folds into the EF-hand domain. Ca(2+) is bound by residues Asp274, Asp276, Asp278, and Thr280. N-linked (GlcNAc...) asparagine glycosylation is present at Asn282. Glu285 provides a ligand contact to Ca(2+). The segment at Ala350–Ser395 is disordered. A compositionally biased stretch (low complexity) spans Asp363–Asp372. Residues Thr373–Leu386 are compositionally biased toward acidic residues.

The protein belongs to the polysaccharide lyase 1 family. Ca(2+) is required as a cofactor.

It is found in the secreted. The catalysed reaction is Eliminative cleavage of (1-&gt;4)-alpha-D-galacturonan to give oligosaccharides with 4-deoxy-alpha-D-galact-4-enuronosyl groups at their non-reducing ends.. Functionally, pectinolytic enzyme consist of four classes of enzymes: pectin lyase, polygalacturonase, pectin methylesterase and rhamnogalacturonase. Among pectinolytic enzymes, pectin lyase is the most important in depolymerization of pectin, since it cleaves internal glycosidic bonds of highly methylated pectins. Favors pectate, the anion, over pectin, the methyl ester. In Aspergillus flavus (strain ATCC 200026 / FGSC A1120 / IAM 13836 / NRRL 3357 / JCM 12722 / SRRC 167), this protein is Probable pectate lyase C (plyC).